The primary structure comprises 405 residues: Phosphopentomutase (405 aa).

6 residues coordinate Mn(2+): D10, D303, H308, D344, H345, and H356.

It belongs to the phosphopentomutase family. Requires Mn(2+) as cofactor.

It localises to the cytoplasm. The enzyme catalyses 2-deoxy-alpha-D-ribose 1-phosphate = 2-deoxy-D-ribose 5-phosphate. It carries out the reaction alpha-D-ribose 1-phosphate = D-ribose 5-phosphate. Its pathway is carbohydrate degradation; 2-deoxy-D-ribose 1-phosphate degradation; D-glyceraldehyde 3-phosphate and acetaldehyde from 2-deoxy-alpha-D-ribose 1-phosphate: step 1/2. Isomerase that catalyzes the conversion of deoxy-ribose 1-phosphate (dRib-1-P) and ribose 1-phosphate (Rib-1-P) to deoxy-ribose 5-phosphate (dRib-5-P) and ribose 5-phosphate (Rib-5-P), respectively. The chain is Phosphopentomutase from Shewanella woodyi (strain ATCC 51908 / MS32).